We begin with the raw amino-acid sequence, 262 residues long: Putative ankyrin repeat protein R848 (262 aa).

7 ANK repeats span residues S8–H37, D38–D67, C68–A97, D99–A127, D128–A157, D159–S187, and N189–T217.

The protein is Putative ankyrin repeat protein R848 of Acanthamoeba polyphaga (Amoeba).